Reading from the N-terminus, the 419-residue chain is Acetylornithine aminotransferase (419 aa).

Pyridoxal 5'-phosphate is bound by residues 116 to 117 (GA) and Phe149. Arg152 provides a ligand contact to N(2)-acetyl-L-ornithine. Position 240 to 243 (240 to 243 (DEVQ)) interacts with pyridoxal 5'-phosphate. Lys269 carries the N6-(pyridoxal phosphate)lysine modification. Ser296 lines the N(2)-acetyl-L-ornithine pocket. Residue Thr297 coordinates pyridoxal 5'-phosphate.

The protein belongs to the class-III pyridoxal-phosphate-dependent aminotransferase family. ArgD subfamily. In terms of assembly, homodimer. It depends on pyridoxal 5'-phosphate as a cofactor.

It localises to the cytoplasm. It catalyses the reaction N(2)-acetyl-L-ornithine + 2-oxoglutarate = N-acetyl-L-glutamate 5-semialdehyde + L-glutamate. The protein operates within amino-acid biosynthesis; L-arginine biosynthesis; N(2)-acetyl-L-ornithine from L-glutamate: step 4/4. The sequence is that of Acetylornithine aminotransferase from Prochlorococcus marinus (strain SARG / CCMP1375 / SS120).